Here is a 130-residue protein sequence, read N- to C-terminus: Spore coat protein M (130 aa).

In terms of biological role, involved in spore outer coat assembly. May be part of a cross-linked insoluble skeleton that surrounds the spore, serves as a matrix for the assembly of additional outer coat material, and confers structural stability to the final structure. The sequence is that of Spore coat protein M (cotM) from Bacillus subtilis (strain 168).